The primary structure comprises 217 residues: AFG2-interacting ribosome maturation factor (217 aa).

As to quaternary structure, part of the 55LCC heterohexameric ATPase complex composed at least of AIRIM, AFG2A, AFG2B and CINP. Does not associate with pre-60S ribosomal particles. Phosphorylated on serines by CK2 kinase.

The protein resides in the nucleus. It is found in the cytoplasm. Part of the 55LCC heterohexameric ATPase complex which is chromatin-associated and promotes replisome proteostasis to maintain replication fork progression and genome stability. Required for replication fork progression, sister chromatid cohesion, and chromosome stability. The ATPase activity is specifically enhanced by replication fork DNA and is coupled to cysteine protease-dependent cleavage of replisome substrates in response to replication fork damage. Uses ATPase activity to process replisome substrates in S-phase, facilitating their proteolytic turnover from chromatin to ensure DNA replication and mitotic fidelity. Involved in the cytoplasmic maturation steps of pre-60S ribosomal particles by promoting the release of shuttling protein RSL24D1/RLP24 from the pre-ribosomal particles. The protein is AFG2-interacting ribosome maturation factor (Airim) of Mus musculus (Mouse).